The sequence spans 338 residues: uncharacterized protein (338 aa).

The N-terminal stretch at methionine 1–alanine 29 is a signal peptide.

It belongs to the aerolysin family.

This is an uncharacterized protein from Staphylococcus aureus (strain bovine RF122 / ET3-1).